A 220-amino-acid chain; its full sequence is Thiamine-phosphate synthase (220 aa).

4-amino-2-methyl-5-(diphosphooxymethyl)pyrimidine is bound by residues 47-51 (QYREK) and N78. The Mg(2+) site is built by D79 and D98. S117 provides a ligand contact to 4-amino-2-methyl-5-(diphosphooxymethyl)pyrimidine. 143–145 (TAT) is a binding site for 2-[(2R,5Z)-2-carboxy-4-methylthiazol-5(2H)-ylidene]ethyl phosphate. Residue K146 participates in 4-amino-2-methyl-5-(diphosphooxymethyl)pyrimidine binding. Residues G174 and 194–195 (IS) contribute to the 2-[(2R,5Z)-2-carboxy-4-methylthiazol-5(2H)-ylidene]ethyl phosphate site.

The protein belongs to the thiamine-phosphate synthase family. The cofactor is Mg(2+).

The catalysed reaction is 2-[(2R,5Z)-2-carboxy-4-methylthiazol-5(2H)-ylidene]ethyl phosphate + 4-amino-2-methyl-5-(diphosphooxymethyl)pyrimidine + 2 H(+) = thiamine phosphate + CO2 + diphosphate. It carries out the reaction 2-(2-carboxy-4-methylthiazol-5-yl)ethyl phosphate + 4-amino-2-methyl-5-(diphosphooxymethyl)pyrimidine + 2 H(+) = thiamine phosphate + CO2 + diphosphate. It catalyses the reaction 4-methyl-5-(2-phosphooxyethyl)-thiazole + 4-amino-2-methyl-5-(diphosphooxymethyl)pyrimidine + H(+) = thiamine phosphate + diphosphate. It functions in the pathway cofactor biosynthesis; thiamine diphosphate biosynthesis; thiamine phosphate from 4-amino-2-methyl-5-diphosphomethylpyrimidine and 4-methyl-5-(2-phosphoethyl)-thiazole: step 1/1. Condenses 4-methyl-5-(beta-hydroxyethyl)thiazole monophosphate (THZ-P) and 2-methyl-4-amino-5-hydroxymethyl pyrimidine pyrophosphate (HMP-PP) to form thiamine monophosphate (TMP). The protein is Thiamine-phosphate synthase of Methanosarcina barkeri (strain Fusaro / DSM 804).